The following is a 348-amino-acid chain: Lipopolysaccharide heptosyltransferase 2 (348 aa).

The protein belongs to the glycosyltransferase 9 family.

It carries out the reaction an L-alpha-D-Hep-(1-&gt;5)-[alpha-Kdo-(2-&gt;4)]-alpha-Kdo-(2-&gt;6)-lipid A + ADP-L-glycero-beta-D-manno-heptose = an L-alpha-D-Hep-(1-&gt;3)-L-alpha-D-Hep-(1-&gt;5)-[alpha-Kdo-(2-&gt;4)]-alpha-Kdo-(2-&gt;6)-lipid A + ADP + H(+). The enzyme catalyses L-alpha-D-Hep-(1-&gt;5)-[alpha-Kdo-(2-&gt;4)]-alpha-Kdo-(2-&gt;6)-lipid A (E. coli) + ADP-L-glycero-beta-D-manno-heptose = L-alpha-D-Hep-(1-&gt;3)-L-alpha-D-Hep-(1-&gt;5)-[alpha-Kdo-(2-&gt;4)]-alpha-Kdo-(2-&gt;6)-lipid A (E. coli) + ADP + H(+). The protein operates within bacterial outer membrane biogenesis; LPS core biosynthesis. In terms of biological role, glycosyltransferase involved in the biosynthesis of the core oligosaccharide region of lipopolysaccharide (LPS). Catalyzes the addition of the second heptose unit to the heptosyl-Kdo2-lipid A module. The analog ADP-mannose can serve as an alternative donor in place of ADP-L-glycero-D-manno-heptose, but with lower efficiency. The polypeptide is Lipopolysaccharide heptosyltransferase 2 (Escherichia coli (strain K12)).